We begin with the raw amino-acid sequence, 1097 residues long: Transmembrane protein 132D (1097 aa).

A signal peptide spans 1 to 30 (MCPSEMGTLWYLWSPVLISLAALFSKVTEG). The Extracellular portion of the chain corresponds to 31-913 (RGILESIQRF…PDQAAKGLSD (883 aa)). Residues 233–245 (DERGDCAKEDSRK) are compositionally biased toward basic and acidic residues. Disordered regions lie at residues 233 to 263 (DERG…SPPL) and 885 to 906 (SFPD…DPDQ). A helical transmembrane segment spans residues 914–934 (LEIGMYALLGVFCLAILVFLI). Over 935 to 1097 (NCVTFALKYR…SCMERLHEHV (163 aa)) the chain is Cytoplasmic. Residues 1021–1042 (MLTDDKEQKSEPPTSPTSKRKR) are disordered.

The protein belongs to the TMEM132 family. As to expression, expressed in mature oligodendrocytes in the brain.

It localises to the membrane. Its function is as follows. Regulates neuronal morphology via inhibition of the WAVE regulatory complex (WCR), a complex that controls F-actin cytoskeletal dynamics. The polypeptide is Transmembrane protein 132D (Tmem132d) (Rattus norvegicus (Rat)).